The sequence spans 93 residues: Neurophysin 1 (93 aa).

Intrachain disulfides connect cysteine 10–cysteine 54, cysteine 13–cysteine 27, cysteine 21–cysteine 44, cysteine 28–cysteine 34, cysteine 61–cysteine 74, cysteine 68–cysteine 86, and cysteine 75–cysteine 80.

Belongs to the vasopressin/oxytocin family.

Neurophysin 1 specifically binds oxytocin. The protein is Neurophysin 1 of Struthio camelus (Common ostrich).